Here is a 266-residue protein sequence, read N- to C-terminus: L-aspartate dehydrogenase (266 aa).

Residues Ala-123 and Asn-189 each coordinate NAD(+). Residue His-219 is part of the active site.

It belongs to the L-aspartate dehydrogenase family.

It carries out the reaction L-aspartate + NADP(+) + H2O = oxaloacetate + NH4(+) + NADPH + H(+). It catalyses the reaction L-aspartate + NAD(+) + H2O = oxaloacetate + NH4(+) + NADH + H(+). The protein operates within cofactor biosynthesis; NAD(+) biosynthesis; iminoaspartate from L-aspartate (dehydrogenase route): step 1/1. In terms of biological role, specifically catalyzes the NAD or NADP-dependent dehydrogenation of L-aspartate to iminoaspartate. The sequence is that of L-aspartate dehydrogenase from Cupriavidus necator (strain ATCC 17699 / DSM 428 / KCTC 22496 / NCIMB 10442 / H16 / Stanier 337) (Ralstonia eutropha).